The following is a 233-amino-acid chain: Lysine exporter LysE (233 aa).

Residues 1–2 (ME) are Cytoplasmic-facing. The helical transmembrane segment at 3-23 (IFITGLLLGASLLLSIGPQNV) threads the bilayer. Topologically, residues 24-65 (LVIKQGIKREGLIAVLLVCLISDVFLFIAGTLGVDLLSNAAP) are periplasmic. Residues 66–86 (IVLDIMRWGGIAYLLWFAVMA) form a helical membrane-spanning segment. The Cytoplasmic portion of the chain corresponds to 87–143 (AKDAMTNKVEAPQIIEETEPTVPDDTPLGGSAVATDTRNRVRVEVSVDKQRVWVKPM). Residues 144–164 (LMAIVLTWLNPNAYLDAFVFI) form a helical membrane-spanning segment. Residues 165–176 (GGVGAQYGDTGR) are Periplasmic-facing. A helical transmembrane segment spans residues 177-197 (WIFAAGAFAASLIWFPLVGFG). The Cytoplasmic segment spans residues 198–212 (AAALSRPLSSPKVWR). The chain crosses the membrane as a helical span at residues 213–233 (WINVVVAVVMTALAIKLMLMG).

Belongs to the LysE/ArgO transporter (TC 2.A.75) family.

The protein resides in the cell inner membrane. Transport process is modulated by three forces: the membrane potential, the chemical potential of lysine, and the proton gradient. Strongly inhibited by CCCP and valinomycin. Functionally, catalyzes the efflux of L-lysine. Can also export L-arginine and L-citrulline. The lysEG system prevents bacteriostasis due to elevated L-lysine or L-arginine concentrations that arise during growth in the presence of peptides or in mutants possessing a deregulated biosynthesis pathway. In vitro, can also export D-lysine during biotechnological production of D-amino acids. The polypeptide is Lysine exporter LysE (Corynebacterium glutamicum (strain ATCC 13032 / DSM 20300 / JCM 1318 / BCRC 11384 / CCUG 27702 / LMG 3730 / NBRC 12168 / NCIMB 10025 / NRRL B-2784 / 534)).